Reading from the N-terminus, the 103-residue chain is Large ribosomal subunit protein bL21 (103 aa).

This sequence belongs to the bacterial ribosomal protein bL21 family. In terms of assembly, part of the 50S ribosomal subunit. Contacts protein L20.

Functionally, this protein binds to 23S rRNA in the presence of protein L20. In Klebsiella pneumoniae (strain 342), this protein is Large ribosomal subunit protein bL21.